The following is a 270-amino-acid chain: Formamidopyrimidine-DNA glycosylase (270 aa).

Proline 2 (schiff-base intermediate with DNA) is an active-site residue. Glutamate 3 (proton donor) is an active-site residue. Residue lysine 58 is the Proton donor; for beta-elimination activity of the active site. Positions 91, 110, and 151 each coordinate DNA. The FPG-type zinc-finger motif lies at 236-270 (FVYGRGGQPCKVCGTELREVKLGQRASVYCPRCQR). Arginine 260 (proton donor; for delta-elimination activity) is an active-site residue.

This sequence belongs to the FPG family. Monomer. Zn(2+) is required as a cofactor.

The enzyme catalyses Hydrolysis of DNA containing ring-opened 7-methylguanine residues, releasing 2,6-diamino-4-hydroxy-5-(N-methyl)formamidopyrimidine.. The catalysed reaction is 2'-deoxyribonucleotide-(2'-deoxyribose 5'-phosphate)-2'-deoxyribonucleotide-DNA = a 3'-end 2'-deoxyribonucleotide-(2,3-dehydro-2,3-deoxyribose 5'-phosphate)-DNA + a 5'-end 5'-phospho-2'-deoxyribonucleoside-DNA + H(+). Its function is as follows. Involved in base excision repair of DNA damaged by oxidation or by mutagenic agents. Acts as a DNA glycosylase that recognizes and removes damaged bases. Has a preference for oxidized purines, such as 7,8-dihydro-8-oxoguanine (8-oxoG). Has AP (apurinic/apyrimidinic) lyase activity and introduces nicks in the DNA strand. Cleaves the DNA backbone by beta-delta elimination to generate a single-strand break at the site of the removed base with both 3'- and 5'-phosphates. The chain is Formamidopyrimidine-DNA glycosylase from Pseudomonas putida (strain ATCC 700007 / DSM 6899 / JCM 31910 / BCRC 17059 / LMG 24140 / F1).